Reading from the N-terminus, the 374-residue chain is Peptide chain release factor 2 (374 aa).

Glutamine 248 bears the N5-methylglutamine mark.

This sequence belongs to the prokaryotic/mitochondrial release factor family. Post-translationally, methylated by PrmC. Methylation increases the termination efficiency of RF2.

Its subcellular location is the cytoplasm. Peptide chain release factor 2 directs the termination of translation in response to the peptide chain termination codons UGA and UAA. The protein is Peptide chain release factor 2 of Thermomicrobium roseum (strain ATCC 27502 / DSM 5159 / P-2).